The following is a 277-amino-acid chain: MDFQHWLHEAVNQLRDSDSPRRDAEILLEYVTGKGRTYIMAFGETPLTDVQQQQLADLLQRRKQGEPIAYLTGLREFWSLPLFVSPATLIPRPDTECLVEQALARLPVKTCRILDLGTGTGAIALALACERPDCEVTAVDRMPDAVALAIRNAEHLAIRNVRILQSCWFSALSGQQFDMIVSNPPYIDAQDPHLSEGDVRFEPRSALVADENGMADLTHIIDNARQMLTPGGFLLLEHGWQQGEAVRAVFRRSGYSDVETCRDYGGNERVTCGRFTP.

S-adenosyl-L-methionine is bound by residues 117 to 121 (GTGTG), aspartate 140, tryptophan 168, and asparagine 183. Substrate is bound at residue 183–186 (NPPY).

Belongs to the protein N5-glutamine methyltransferase family. PrmC subfamily.

The enzyme catalyses L-glutaminyl-[peptide chain release factor] + S-adenosyl-L-methionine = N(5)-methyl-L-glutaminyl-[peptide chain release factor] + S-adenosyl-L-homocysteine + H(+). Functionally, methylates the class 1 translation termination release factors RF1/PrfA and RF2/PrfB on the glutamine residue of the universally conserved GGQ motif. This is Release factor glutamine methyltransferase from Salmonella typhimurium (strain LT2 / SGSC1412 / ATCC 700720).